We begin with the raw amino-acid sequence, 482 residues long: tRNA sulfurtransferase (482 aa).

The 105-residue stretch at 61-165 (LAIRDALTRI…DDRLLLIKGR (105 aa)) folds into the THUMP domain. ATP-binding positions include 183–184 (LI), Lys-265, Gly-287, and Gln-296. A disulfide bridge links Cys-344 with Cys-456. Residues 404-482 (FGPNDVILDI…GFNNVKVYRP (79 aa)) enclose the Rhodanese domain. Cys-456 functions as the Cysteine persulfide intermediate in the catalytic mechanism.

Belongs to the ThiI family.

It localises to the cytoplasm. It catalyses the reaction [ThiI sulfur-carrier protein]-S-sulfanyl-L-cysteine + a uridine in tRNA + 2 reduced [2Fe-2S]-[ferredoxin] + ATP + H(+) = [ThiI sulfur-carrier protein]-L-cysteine + a 4-thiouridine in tRNA + 2 oxidized [2Fe-2S]-[ferredoxin] + AMP + diphosphate. The catalysed reaction is [ThiS sulfur-carrier protein]-C-terminal Gly-Gly-AMP + S-sulfanyl-L-cysteinyl-[cysteine desulfurase] + AH2 = [ThiS sulfur-carrier protein]-C-terminal-Gly-aminoethanethioate + L-cysteinyl-[cysteine desulfurase] + A + AMP + 2 H(+). Its pathway is cofactor biosynthesis; thiamine diphosphate biosynthesis. Its function is as follows. Catalyzes the ATP-dependent transfer of a sulfur to tRNA to produce 4-thiouridine in position 8 of tRNAs, which functions as a near-UV photosensor. Also catalyzes the transfer of sulfur to the sulfur carrier protein ThiS, forming ThiS-thiocarboxylate. This is a step in the synthesis of thiazole, in the thiamine biosynthesis pathway. The sulfur is donated as persulfide by IscS. The polypeptide is tRNA sulfurtransferase (Escherichia coli O139:H28 (strain E24377A / ETEC)).